The primary structure comprises 300 residues: tRNA uridine(34) hydroxylase (300 aa).

The Rhodanese domain occupies 128-222 (ADPEVIVVDT…YLEDVPQAQS (95 aa)). Cys182 acts as the Cysteine persulfide intermediate in catalysis.

The protein belongs to the TrhO family.

The enzyme catalyses uridine(34) in tRNA + AH2 + O2 = 5-hydroxyuridine(34) in tRNA + A + H2O. Functionally, catalyzes oxygen-dependent 5-hydroxyuridine (ho5U) modification at position 34 in tRNAs. This Deinococcus radiodurans (strain ATCC 13939 / DSM 20539 / JCM 16871 / CCUG 27074 / LMG 4051 / NBRC 15346 / NCIMB 9279 / VKM B-1422 / R1) protein is tRNA uridine(34) hydroxylase.